Here is a 157-residue protein sequence, read N- to C-terminus: 2-C-methyl-D-erythritol 2,4-cyclodiphosphate synthase (157 aa).

Residues aspartate 8 and histidine 10 each coordinate a divalent metal cation. 4-CDP-2-C-methyl-D-erythritol 2-phosphate-binding positions include 8–10 (DVH) and 34–35 (HS). Residue histidine 42 coordinates a divalent metal cation. 4-CDP-2-C-methyl-D-erythritol 2-phosphate contacts are provided by residues 56–58 (DIG), 132–135 (TTNE), and arginine 142.

The protein belongs to the IspF family. In terms of assembly, homotrimer. Requires a divalent metal cation as cofactor.

It catalyses the reaction 4-CDP-2-C-methyl-D-erythritol 2-phosphate = 2-C-methyl-D-erythritol 2,4-cyclic diphosphate + CMP. It participates in isoprenoid biosynthesis; isopentenyl diphosphate biosynthesis via DXP pathway; isopentenyl diphosphate from 1-deoxy-D-xylulose 5-phosphate: step 4/6. Involved in the biosynthesis of isopentenyl diphosphate (IPP) and dimethylallyl diphosphate (DMAPP), two major building blocks of isoprenoid compounds. Catalyzes the conversion of 4-diphosphocytidyl-2-C-methyl-D-erythritol 2-phosphate (CDP-ME2P) to 2-C-methyl-D-erythritol 2,4-cyclodiphosphate (ME-CPP) with a corresponding release of cytidine 5-monophosphate (CMP). This chain is 2-C-methyl-D-erythritol 2,4-cyclodiphosphate synthase, found in Pelodictyon phaeoclathratiforme (strain DSM 5477 / BU-1).